The sequence spans 784 residues: MTKKLALKRRGKDSEPTNEVVASSEASENEEEEEDLLQAVKDPGEDSTDDEGIDQEYHSDSSEELQFESDEEGNYLGRKQSSSAEEDEESSDEEDNEEEESTDGEEVEDEEKDSKSKQTDDKPSGSGAASKKALTAELPKRDSSKPEYQDSDTSDEEDIRNTVGNIPMHWYDEYKHIGYDWDAKKIIKPPQGDQIDEFLRKIEDPDFWRTVKDPLTGQDVRLTDEDIALIKRIVSGRIPNKDHEEYEPWIEWFTSEVEKMPIKNVPDHKRSFLPSVSEKKRVSRMVHALKMGWMKTTEEVEREKQAKRGPKFYMLWETDTSREHMRRIHDPVSAPKRDLPGHAESYNPPPEYLFDAKETKEWLKLKDEPHKRKLHFMPQKFKSLREVPAYSRYLRERFLRCLDLYLCPRAKRVKLNIDAEYLIPKLPSPRDLQPFPTVESMVYRGHTDLVRSVSVEPKGEYLVSGSDDKTVKIWEIATGRCIRTIETDEVVRCVAWCPNPKLSIIAVATGNRLLLVNPKVGDKVLVKKTDDLLAEAPSQDVIESERIKTAVQWSNAEADEQEKGVRVVITHFKPIRQVTWHGRGDYLATVMPEGANRSALIHQLSKRRSQIPFSKSKGLIQFVLFHPVKPCFFVATQHNIRIYDLVKQELVKKLLTNSKWISGMSIHPKGDNLLVSTYDKKMLWFDLDLSTKPYQTMRLHRNAVRSVAFHLRYPLFASGSDDQAVIVSHGMVYNDLLQNPLIVPLKKLQTHEKRDEFGVLDVNWHPVQPWVFSTGADSTIRLYT.

Basic residues predominate over residues 1 to 11; it reads MTKKLALKRRG. The segment at 1-159 is disordered; it reads MTKKLALKRR…DSDTSDEEDI (159 aa). Acidic residues-rich tracts occupy residues 27–36, 45–54, 62–73, and 84–111; these read SENEEEEEDL, EDSTDDEGID, SEELQFESDEEG, and AEED…EDEE. Basic and acidic residues-rich tracts occupy residues 112–123 and 138–148; these read KDSKSKQTDDKP and LPKRDSSKPEY. The span at 149-158 shows a compositional bias: acidic residues; sequence QDSDTSDEED. WD repeat units lie at residues 445-486, 488-526, 570-612, 615-653, 656-695, 699-738, and 754-784; these read GHTD…RTIE, DEVV…KVLV, THFK…SQIP, KSKG…LVKK, TNSK…KPYQ, LHRN…DLLQ, and RDEF…RLYT.

The protein belongs to the WD repeat BOP1/ERB1 family.

It localises to the nucleus. The protein resides in the nucleolus. The protein localises to the nucleoplasm. Functionally, required for maturation of ribosomal RNAs and formation of the large ribosomal subunit. The chain is Ribosome biogenesis protein BOP1 homolog from Drosophila melanogaster (Fruit fly).